Here is a 261-residue protein sequence, read N- to C-terminus: Ribosomal RNA small subunit methyltransferase J (261 aa).

S-adenosyl-L-methionine contacts are provided by residues 109 to 110 (RD), 125 to 126 (ER), and Asp-179.

Belongs to the methyltransferase superfamily. RsmJ family.

It is found in the cytoplasm. It catalyses the reaction guanosine(1516) in 16S rRNA + S-adenosyl-L-methionine = N(2)-methylguanosine(1516) in 16S rRNA + S-adenosyl-L-homocysteine + H(+). Its function is as follows. Specifically methylates the guanosine in position 1516 of 16S rRNA. This Pseudomonas aeruginosa (strain LESB58) protein is Ribosomal RNA small subunit methyltransferase J.